We begin with the raw amino-acid sequence, 268 residues long: Imidazole glycerol phosphate synthase subunit HisF (268 aa).

Active-site residues include D12 and D131.

This sequence belongs to the HisA/HisF family. In terms of assembly, heterodimer of HisH and HisF.

Its subcellular location is the cytoplasm. It catalyses the reaction 5-[(5-phospho-1-deoxy-D-ribulos-1-ylimino)methylamino]-1-(5-phospho-beta-D-ribosyl)imidazole-4-carboxamide + L-glutamine = D-erythro-1-(imidazol-4-yl)glycerol 3-phosphate + 5-amino-1-(5-phospho-beta-D-ribosyl)imidazole-4-carboxamide + L-glutamate + H(+). Its pathway is amino-acid biosynthesis; L-histidine biosynthesis; L-histidine from 5-phospho-alpha-D-ribose 1-diphosphate: step 5/9. In terms of biological role, IGPS catalyzes the conversion of PRFAR and glutamine to IGP, AICAR and glutamate. The HisF subunit catalyzes the cyclization activity that produces IGP and AICAR from PRFAR using the ammonia provided by the HisH subunit. The chain is Imidazole glycerol phosphate synthase subunit HisF from Methanoregula boonei (strain DSM 21154 / JCM 14090 / 6A8).